A 107-amino-acid polypeptide reads, in one-letter code: MDKVNNNCCCGENAKPCCTDPNSGCCCVSETNNCCKSDKKECCTGTGEGCKCTGCKCCQPAKSGCCCGDKAKACCTDPNSGCCCSSKTNKCCDSTNKTECKTCECCK.

A propeptide spanning residues 1–2 is cleaved from the precursor; that stretch reads MD.

The protein belongs to the metallothionein superfamily. Type 7 family.

Functionally, the metallothioneins are involved in the cellular sequestration of toxic metal ions. Binds 12 cadmium ions per molecule. The sequence is that of Metallothionein-1 from Tetrahymena pigmentosa.